The primary structure comprises 600 residues: Elongation factor 4 (600 aa).

Positions 13-194 constitute a tr-type G domain; the sequence is DRIRNFCIIA…AIVERIPPPR (182 aa). GTP-binding positions include 25-30 and 141-144; these read DHGKST and NKID.

Belongs to the TRAFAC class translation factor GTPase superfamily. Classic translation factor GTPase family. LepA subfamily.

Its subcellular location is the cell membrane. The enzyme catalyses GTP + H2O = GDP + phosphate + H(+). Its function is as follows. Required for accurate and efficient protein synthesis under certain stress conditions. May act as a fidelity factor of the translation reaction, by catalyzing a one-codon backward translocation of tRNAs on improperly translocated ribosomes. Back-translocation proceeds from a post-translocation (POST) complex to a pre-translocation (PRE) complex, thus giving elongation factor G a second chance to translocate the tRNAs correctly. Binds to ribosomes in a GTP-dependent manner. The sequence is that of Elongation factor 4 from Rubrobacter xylanophilus (strain DSM 9941 / JCM 11954 / NBRC 16129 / PRD-1).